We begin with the raw amino-acid sequence, 324 residues long: Adipolin (324 aa).

The first 24 residues, 1 to 24, serve as a signal peptide directing secretion; it reads MRCWVWLLVAIVLCQQLSVVRVLA. 2 disordered regions span residues 28–66 and 83–121; these read ERKK…DPGL and GANS…MPGA. Polar residues predominate over residues 40–49; it reads EPFNVSLSNS. An N-linked (GlcNAc...) asparagine glycan is attached at Asn43. The segment covering 50-60 has biased composition (basic and acidic residues); it reads EELHETDKLSE. Residues 86–98 are compositionally biased toward basic residues; that stretch reads SKKKCKGKDKKLR. The segment covering 103-118 has biased composition (pro residues); it reads PPGPPGPQGPPGPPGM. Residues 169–324 form the C1q domain; that stretch reads YRRVDEGFHC…SDFMGILMGL (156 aa).

This sequence belongs to the adipolin/erythroferrone family. Homomultimer; disulfide-linked.

It is found in the secreted. Functionally, insulin-sensitizing adipocyte-secreted protein (adipokine) that regulates glucose metabolism in liver and adipose tissue. This Xenopus tropicalis (Western clawed frog) protein is Adipolin (c1qtnf12).